The sequence spans 281 residues: Glycerol uptake facilitator protein (281 aa).

Topologically, residues 1–5 are cytoplasmic; the sequence is MSQTS. Residues 6–34 form a helical membrane-spanning segment; it reads TLKGQCIAEFLGTGLLIFFGVGCVAALKV. Over 35-39 the chain is Periplasmic; sequence AGASF. Residues 40–60 form a helical membrane-spanning segment; sequence GQWEISVIWGLGVAMAIYLTA. Topologically, residues 61–63 are cytoplasmic; that stretch reads GVS. An intramembrane segment occupies 64–67; sequence GAHL. Residues 68-70 carry the NPA 1 motif; that stretch reads NPA. Residues 68–78 constitute an intramembrane region (helical); it reads NPAVTIALWLF. The Cytoplasmic segment spans residues 79–84; sequence ACFDKR. Residues 85 to 108 traverse the membrane as a helical segment; that stretch reads KVIPFIVSQVAGAFCAAALVYGLY. Topologically, residues 109 to 143 are periplasmic; the sequence is YNLFFDFEQTHHIVRGSVESVDLAGTFSTYPNPHI. A helical transmembrane segment spans residues 144-169; it reads NFVQAFAVEMVITAILMGLILALTDD. Residues 170 to 177 are Cytoplasmic-facing; sequence GNGVPRGP. The helical transmembrane segment at 178-194 threads the bilayer; the sequence is LAPLLIGLLIAVIGASM. Over 195–198 the chain is Periplasmic; sequence GPLT. Residues 199–202 lie within the membrane without spanning it; sequence GFAM. An NPA 2 motif is present at residues 203–205; that stretch reads NPA. The helical intramembrane region spans 203-216; the sequence is NPARDFGPKVFAWL. The Periplasmic portion of the chain corresponds to 217-231; the sequence is AGWGNVAFTGGRDIP. The chain crosses the membrane as a helical span at residues 232 to 254; the sequence is YFLVPLFGPIVGAIVGAFAYRKL. Residues 255 to 281 lie on the Cytoplasmic side of the membrane; the sequence is IGRHLPCDICVVEEKETTTPSEQKASL.

The protein belongs to the MIP/aquaporin (TC 1.A.8) family. In terms of assembly, homotetramer.

Its subcellular location is the cell inner membrane. It catalyses the reaction glycerol(in) = glycerol(out). Functionally, mediates glycerol diffusion across the cytoplasmic membrane via a pore-type mechanism. In Escherichia coli O157:H7, this protein is Glycerol uptake facilitator protein (glpF).